A 698-amino-acid polypeptide reads, in one-letter code: Vertnin (698 aa).

This sequence belongs to the vertnin family.

The protein resides in the nucleus. Its function is as follows. Acts as a transcription factor that regulates development of thoracic vertebrae. The sequence is that of Vertnin (VRTN) from Sus scrofa (Pig).